The chain runs to 457 residues: ATP synthase subunit beta (457 aa).

Residue 147 to 154 (GGAGVGKT) participates in ATP binding.

Belongs to the ATPase alpha/beta chains family. In terms of assembly, F-type ATPases have 2 components, CF(1) - the catalytic core - and CF(0) - the membrane proton channel. CF(1) has five subunits: alpha(3), beta(3), gamma(1), delta(1), epsilon(1). CF(0) has three main subunits: a(1), b(2) and c(9-12). The alpha and beta chains form an alternating ring which encloses part of the gamma chain. CF(1) is attached to CF(0) by a central stalk formed by the gamma and epsilon chains, while a peripheral stalk is formed by the delta and b chains.

It localises to the cell inner membrane. It catalyses the reaction ATP + H2O + 4 H(+)(in) = ADP + phosphate + 5 H(+)(out). In terms of biological role, produces ATP from ADP in the presence of a proton gradient across the membrane. The catalytic sites are hosted primarily by the beta subunits. In Haemophilus influenzae (strain PittEE), this protein is ATP synthase subunit beta.